Here is a 2406-residue protein sequence, read N- to C-terminus: MEAFWSASKKRSTSVAKGAHFLRQDISRFDANFFGLPKHEADAMDPQQRIMMEVAYEALEGAGLPLDQIAGSRTGVFVGHFSNDYRDMICRDPDDAPLYSFTGTSTASLANRLSYLWDLRGPSFSINTACSSSLVALHLACQSLQRGECEIAIVGGSNLLLNPEMFMFLSNQGFLSPDGKCKSFDESANGYGRGEGFGCVILKRVDDAVLAGDAIRAVIRGTGSNQDGRTKGLTTPSAEAQRALIEEVYQRAGLDFKTTGYTEAHGTGTQAGDSQEMNALAKTIAATHTAESKLIVGSVKSNVSQSSAQNSCRFLTCLQIGHLEAAAGIASVIKAVLMLERGLIPPTIHFKKGNPKIPFDEWNIRVPTTLTPWPTDGVRRISINSFGYSGTNAHAVLDDAYHYLEAKKHAFDKGHASNGTNGTLTNGHILNGEHTSNGMNGTLTNGHASNDEHALNGTNDALTNGHGPTDGPTSRPRLFIWSAQDKDGLKRVREPLAQYIQAKAAEYQQDQSLKTEETFMSELAYTLSERRSRLQWKTYTIASSPSTLSASLSLGEEASATPVALSSRNPRIGFVFTGQGAQWPRMGAELMAYPAFRECIEAAGSYLQGVCGCPWSAAEELQKHKSISLVNSSAYSHALCTILQVALVDLLRTWGITPTAVVGHSGGEIASAYAFGALTREDAWRVAYHRGRLSAAIKTKAPGLNGAMMAVALSPEQAAEWISKVTDGHLVVACINSPTSVTIAGDSLGIDQLLGMLQEKGGIFARKLLVDTAYHSPHMKIIADDYHAMISDVMPRAAQGGCIMSSSVTGAVVEATQLGADYWTASLTSPVRFSEAIYDMLRPIRGKTRLEENTVDVLVEVGPHSALQGPATQSIKVHNIANVPYYSVLRRNQDAVDTALNLAGSLFTQGYKVDIRQVNDDGDAHFAAPLTDLPTYSWNHSQRFWHESRMEREFRSRAAPKPSLLGSPSPSLAEGERIWRGFIRPAEAPWVNDHKIHGAVLYPGAGYLAMALEAATQTADTTRRVVAYKLRDIQLTAAALVADGANLEYIVQLRPHVVGNRDSTAAWTEFIVTTAPDGKALVQNCRGLLVIEYEAAEGSDTSRERSLELQGWKTQYVDAQQACVHRLDPSGFYSDMRSWGLDYGPAFANVCEVRNRDGQSVGSVRIPDIPAPIVDGSDRPHVVHPGTLDAVFHLAFAAAKGGAYAPSTAMVPKSIDAITIAANVPFQAGTRLPGFSRAGRHGLNELVADIVMLDDTEHLPAIVIEGFLCAEIAGASSNSADNSAKSLASRVTWRPALGLLSSDDLCSALSAHIGEAKLVEYLKLFHHSNPVLSVLEVAAVPNPQEPTPTPLLQRECLASVAKTWDVTTACRDETLKTSMRQEAALEVLDFGQDLDTDVPEAYDLLIASDLSLYASDPVPAVERMCKVLKQGGAICILTTDSIFLRIQPFLDACHMEVTVLPNPHGSDAAPSQDPSLIIAKKSLPYTNGINGAAARPQQVTLIQAAHPTEAAIAMASQLTVSLEEHGYEAHVVSWGSDMSTLAGKSCISLVEFQKTLLQDLAVDDFQSVKKLLLETGKLLWVTALDDPSAAMIDGLVRVVRNETPGLSLRVFHADEPTLAPAERLAGMLAKAFLWTGQDNEFRVQGNLLHVSRIEEDTTLNEEIHGLLPGAARTISRIPLKDVQYPVKLCVQTPGMLGSVCLEPDDSAETVLGPDFIEIHVKATALNFREVMVAMGQMADSKLGIDAAGVVRRVGSSVTKFKVGDKVAMYGHGAHRTIHRSRADYCALIPDGMSFEEAATIPAVHGTAWNALVRLARVQKGQSILIHAAAGGVGQVAVQIARHTGMEIFATVSSEAKRKLLRDEYGVPDDHIFNSRDLSFVKGVKRMTNGRGVDVVLNSLAGEALRQTWHCIAPFGYFVEIGVRDIINNTGLDMRPFMQDATFSFFNLTHIEQDRPDIMGAIIQGAFDFLRRGITQLVTPMVTFPISDVEGALRLMQTGKHLGKIALSWDEDHAEPISVVQPRMRAPKLDPDGVYLLVGGLGGLGRSLSSKLVSLGARRLCFLSRSGARSANAKDLIDKLEQQQVRVQIQTCDVADESAIASAVDRCTRELGKIRGVFQCAMVLRDGLFANMTHQQWVESTRPKVQGSWNLHQHLPDDLDFFITLSSFTATFGSRGQSNYAAAGAYEDALAYHRRTRGRHATTVDLGIMRDVGVLAETGMTDAFREWEKPYGIRESEFLVLMERVIDRDIAAIMPPQVLTGFATGGSVSSAGISTPYYMEDARFSILARTGVRDDGASAASTDAVPAYTLVSQAKSFQEASDSVLEALVRQVAKMFQTPPSEIDTSRFLHSYGIDSLVAIEIVNWVMREAKSTMTVFDVLAGVPMTTFCNRIAAKSTVLPKELVPVH.

Residues Met1 to Asp399 enclose the Ketosynthase family 3 (KS3) domain. Cys130 is a catalytic residue. The active-site For beta-ketoacyl synthase activity is the Cys130. A disordered region spans residues Gly414–Pro476. Polar residues predominate over residues Ser417–Ala448. The tract at residues Phe574–Tyr911 is malonyl-CoA:ACP transacylase (MAT) domain. Catalysis depends on Ser665, which acts as the For malonyltransferase activity. The N-terminal hotdog fold stretch occupies residues Pro962–Ala1096. The PKS/mFAS DH domain occupies Pro962 to Asn1278. Residues Leu964–Ala1273 form a dehydratase (DH) domain region. The active-site Proton acceptor; for dehydratase activity is the His994. The segment at Val1124–Asn1278 is C-terminal hotdog fold. The active-site Proton donor; for dehydratase activity is the Asp1189. Positions Gly1694–Leu2006 are enoylreductase (ER) domain. Residues Gly2032–Asp2210 are ketoreductase (KR) domain. Residues Glu2318–Ser2395 enclose the Carrier domain. O-(pantetheine 4'-phosphoryl)serine is present on Ser2355.

It participates in secondary metabolite biosynthesis. Highly reducing polyketide synthase; part of the gene cluster that mediates the biosynthesis of the dimeric xanthones cryptosporioptides. The pathway begins with the synthesis of atrochrysone thioester by the polyketide synthase dmx-nrPKS. The atrochrysone carboxyl ACP thioesterase dmxR1 then breaks the thioester bond and releases the atrochrysone carboxylic acid from dmx-nrPKS. Atrochrysone carboxylic acid is decarboxylated by the decarboxylase dmxR15, and oxidized by the anthrone oxygenase dmxR16 to yield emodin. Emodin is then reduced to emodin hydroquinone by the oxidoreductase dmxR7. A-ring reduction by the short chain dehydrogenase dmxR18, dehydration by the scytalone dehydratase-like protein dmxR17 and probable spontaneous re-oxidation, results in overall deoxygenation to chrysophanol. Baeyer-Villiger oxidation by the Baeyer-Villiger monooxygenase (BVMO) dmxR6 then yields monodictylactone in equilibrium with monodictyphenone. In the case of the cryptosporioptides biosynthesis, monodictylactone is reduced at C-12 to an alcohol (by the short chain dehydrogenases dmxR12 or dmxR8) and hydroxylated at C-5 by dmxR9, yielding the electron-rich aromatic which could eliminate H(2)O to form the ortho-quinonemethide, followed by tautomerisation to paraquinone and complete the formal reduction to produce the 10-methylgroup. Conjugate addition of C-4a-OH to the resulting paraquinone by the monooxygenase dmxR10 then gives cyclohexadienone, which is then reduced at C-5 by the short chain dehydrogenase dmxR3 to give the dihydroxanthone. The 6,7-epoxide in the cryptosporioptides could be introduced by the cytochrome P450 monooxygenase dmxL3. The highly reducing PKS dmxL2 manufactures butyrate, which is further carboxylated by dmxL1 to form ethylmalonate. It is not yet clear whether the carboxylation occurs while the butyrate is attached to the ACP of dmxL2, but this unusual fungal metabolite could then be esterified to O-5 by the O-acetyltransferase dmxR13. Finally, dimerization performed by dmxR5 gives the observed dimers cryptosporioptides A, B and C as the final products of the pathway. In Cryptosporiopsis sp. (strain 8999), this protein is Highly reducing polyketide synthase dmxL2.